Consider the following 86-residue polypeptide: Small ribosomal subunit protein bS20 (86 aa).

The interval 1 to 27 is disordered; the sequence is MANSKQAKKRAGQSEKRRQHNASRRSM.

This sequence belongs to the bacterial ribosomal protein bS20 family.

Its function is as follows. Binds directly to 16S ribosomal RNA. This Colwellia psychrerythraea (strain 34H / ATCC BAA-681) (Vibrio psychroerythus) protein is Small ribosomal subunit protein bS20.